A 149-amino-acid polypeptide reads, in one-letter code: Putative pre-16S rRNA nuclease (149 aa).

The protein belongs to the YqgF nuclease family.

The protein resides in the cytoplasm. Could be a nuclease involved in processing of the 5'-end of pre-16S rRNA. The polypeptide is Putative pre-16S rRNA nuclease (Heliobacterium modesticaldum (strain ATCC 51547 / Ice1)).